Consider the following 126-residue polypeptide: uncharacterized protein (126 aa).

In terms of domain architecture, HIT spans Ile19–Ala126. Positions His111–His115 match the Histidine triad motif motif.

This is an uncharacterized protein from Chlamydia muridarum (strain MoPn / Nigg).